The following is a 1209-amino-acid chain: DNA-directed RNA polymerase subunit beta'' (1209 aa).

Residues C233, C308, C315, and C318 each coordinate Zn(2+).

This sequence belongs to the RNA polymerase beta' chain family. RpoC2 subfamily. In terms of assembly, in plastids the minimal PEP RNA polymerase catalytic core is composed of four subunits: alpha, beta, beta', and beta''. When a (nuclear-encoded) sigma factor is associated with the core the holoenzyme is formed, which can initiate transcription. The cofactor is Zn(2+).

It localises to the plastid. It is found in the chloroplast. It catalyses the reaction RNA(n) + a ribonucleoside 5'-triphosphate = RNA(n+1) + diphosphate. Its function is as follows. DNA-dependent RNA polymerase catalyzes the transcription of DNA into RNA using the four ribonucleoside triphosphates as substrates. This chain is DNA-directed RNA polymerase subunit beta'', found in Pinus koraiensis (Korean pine).